A 318-amino-acid chain; its full sequence is Acetyl-coenzyme A carboxylase carboxyl transferase subunit alpha (318 aa).

The CoA carboxyltransferase C-terminal domain maps to 38–292 (KLEKRLAKLE…NKTITKSLHA (255 aa)).

Belongs to the AccA family. In terms of assembly, acetyl-CoA carboxylase is a heterohexamer composed of biotin carboxyl carrier protein (AccB), biotin carboxylase (AccC) and two subunits each of ACCase subunit alpha (AccA) and ACCase subunit beta (AccD).

The protein resides in the cytoplasm. It catalyses the reaction N(6)-carboxybiotinyl-L-lysyl-[protein] + acetyl-CoA = N(6)-biotinyl-L-lysyl-[protein] + malonyl-CoA. It participates in lipid metabolism; malonyl-CoA biosynthesis; malonyl-CoA from acetyl-CoA: step 1/1. In terms of biological role, component of the acetyl coenzyme A carboxylase (ACC) complex. First, biotin carboxylase catalyzes the carboxylation of biotin on its carrier protein (BCCP) and then the CO(2) group is transferred by the carboxyltransferase to acetyl-CoA to form malonyl-CoA. This chain is Acetyl-coenzyme A carboxylase carboxyl transferase subunit alpha, found in Listeria welshimeri serovar 6b (strain ATCC 35897 / DSM 20650 / CCUG 15529 / CIP 8149 / NCTC 11857 / SLCC 5334 / V8).